The chain runs to 395 residues: MATFTDAEIDELFETSGTVIDSIITAQGKPVETVGRSAIPRGKTKALSSAWEKHGSVQSPASQDTPDRQDRSDKQLSTPEQVTPHDSPPATSTDQPPTQAADEAGDTQLKTGASNSLLSMLDKLSNKSSNAKKGPWSSPQEGHHQRPTQQQGSQPSRGNSQERPQNQVKAAPGSQGTDANIAYHGQWEESQLSAGATHHALRSGQSQDNTPAPVDHVQLPVDFVQAMMSMMEAISQRVSKVDYQLDLVLKQTSSIPMMRSEIQQLKTSVAVMEANLGMMKILDPGCANVSSLSDLRAVARSHPVLVSGPGDPSPYVTQGGEMALNKLSQPVQHPSELIKPAMVSGPDIGVEKDTVRALIMSRPMHPSSSAKLLSKLDAAGSIEEIRKIKRLALNG.

Disordered regions lie at residues 34–104 (VGRS…ADEA), 126–179 (NKSS…GTDA), and 192–214 (LSAGATHHALRSGQSQDNTPAPV). The span at 65 to 74 (TPDRQDRSDK) shows a compositional bias: basic and acidic residues. 2 stretches are compositionally biased toward polar residues: residues 89–98 (PATSTDQPPT) and 147–178 (PTQQQGSQPSRGNSQERPQNQVKAAPGSQGTD). The tract at residues 222–285 (DFVQAMMSMM…LGMMKILDPG (64 aa)) is multimerization.

The protein belongs to the rubulavirus/avulavirus P protein family. Homotetramer. Interacts (via multimerization domain) with polymerase L; this interaction forms the polymerase L-P complex. Interacts (via N-terminus) with N0 (via Ncore); this interaction allows P to chaperon N0 to avoid N polymerization before encapsidation. Interacts (via C-terminus) with N-RNA template; this interaction positions the polymerase on the template for both transcription and replication.

Functionally, essential cofactor of the RNA polymerase L that plays a central role in the transcription and replication by forming the polymerase complex with RNA polymerase L and recruiting L to the genomic N-RNA template for RNA synthesis. Also plays a central role in the encapsidation of nascent RNA chains by forming the encapsidation complex with the nucleocapsid protein N (N-P complex). Acts as a chaperone for newly synthesized free N protein, so-called N0, allowing encapsidation of nascent RNA chains during replication. The nucleoprotein protein N prevents excessive phosphorylation of P, which leads to down-regulation of viral transcription/ replication. Participates, together with N, in the formation of viral factories (viroplasms), which are large inclusions in the host cytoplasm where replication takes place. The polypeptide is Phosphoprotein (P/V) (Newcastle disease virus (strain Ulster/2C) (NDV)).